Here is a 462-residue protein sequence, read N- to C-terminus: Microspherule protein 1 (462 aa).

An N-acetylmethionine modification is found at methionine 1. A disordered region spans residues 1–130 (MDKDSQGLLD…KSKQPLQVTK (130 aa)). The residue at position 22 (serine 22) is a Phosphoserine. Residues 43–55 (PKRRSSSRFIKRK) show a composition bias toward basic residues. Position 102 is a phosphoserine (serine 102). Residue threonine 103 is modified to Phosphothreonine. A compositionally biased stretch (pro residues) spans 103-112 (TPVPPSPAPA). At serine 108 the chain carries Phosphoserine. The Nuclear localization signal motif lies at 113-123 (PGLTKRVKKSK). N6-acetyllysine is present on residues lysine 123 and lysine 130. Residue serine 282 is modified to Phosphoserine. A coiled-coil region spans residues 301 to 335 (LEHELMVADRRQKREIRQLEQELHKWQVLVDSITG). The FHA domain occupies 363 to 419 (ITLGRATKDNQIDVDLSLEGPAWKISRKQGVIKLKNNGDFFIANEGRRPIYIDGRPV). The UBR5-degron motif lies at 389–396 (RKQGVIKL).

As to quaternary structure, component of the chromatin remodeling INO80 complex; specifically part of a complex module associated with the N-terminus of INO80. Component of some MLL1/MLL complex, at least composed of the core components KMT2A/MLL1, ASH2L, HCFC1, WDR5 and RBBP5, as well as the facultative components BACC1, CHD8, E2F6, HSP70, INO80C, KANSL1, LAS1L, MAX, MCRS1, MGA, KAT8/MOF, PELP1, PHF20, PRP31, RING2, RUVB1/TIP49A, RUVB2/TIP49B, SENP3, TAF1, TAF4, TAF6, TAF7, TAF9 and TEX10. Component of the NSL complex at least composed of MOF/KAT8, KANSL1, KANSL2, KANSL3, MCRS1, PHF20, OGT1/OGT, WDR5 and HCFC1. Interacts with NOP2. Interacts with PINX1. Interacts with TERT. Interacts with CCDC85B. Interacts with DAXX. Interacts (via N-terminus) with FMR1 (via phosphorylated form). Interacts with FXR1 and FXR2. Interacts (via C-terminus) with NDE1 (via C-terminus); phosphorylation of NDE1 inhibits the interaction. Interacts (via C-terminus) with ZNF375. Interacts (via C-terminus) with active GTP-bound RHEB (via N-terminus) under conditions of high amino acid concentration; the interaction promotes mTORC1 complex activation by RHEB. Interacts (via N-terminus) with the mTORC1 complex; the interaction ensures mTORC1 activation by RHEB. Interacts with DYNC1I1; the interaction is required for the proper distribution of centriolar satellites. Interacts with TTBK2; the interaction is required for recruitment of TTBK2 to the mother centriole. Interacts with KIF2A; the interaction occurs during mitosis and facilitates chromosome alignment. In terms of assembly, (Microbial infection) Interacts with Herpes simplex virus ICP22. In terms of processing, ubiquitinated by UBR5 when not assembled in the INO80 complex, leading to its degradation: UBR5 recognizes and binds a degron that is not accessible when MCRS1 is part of the INO80 complex. Post-translationally, phosphorylated by AURKA on Ser-35 and/or Ser-36 during mitosis which is required for kinetochore fiber assembly and mitotic progression but not for spindle localization or for chromosome-induced microtuble aster formation. Also phosphorylated by AURKA on Ser-85 and/or Ser-87. Phosphorylated by TTK/MPS1 which enhances recruitment of KIF2A to the minus end of spindle microtubules and facilitates precise chromosome segregation. Detected in testis, and at lower levels in spleen, thymus, prostate, uterus, small intestine, colon and leukocytes.

The protein localises to the nucleus. Its subcellular location is the nucleolus. The protein resides in the cytoplasm. It is found in the cytoskeleton. It localises to the microtubule organizing center. The protein localises to the centrosome. Its subcellular location is the spindle pole. The protein resides in the chromosome. It is found in the centromere. It localises to the kinetochore. The protein localises to the lysosome. Its subcellular location is the centriolar satellite. In terms of biological role, modulates the transcription repressor activity of DAXX by recruiting it to the nucleolus. As part of the NSL complex, may be involved in acetylation of nucleosomal histone H4 on several lysine residues. Putative regulatory component of the chromatin remodeling INO80 complex which is involved in transcriptional regulation, DNA replication and probably DNA repair. May also be an inhibitor of TERT telomerase activity. Binds to G-quadruplex structures in mRNA. Binds to RNA homomer poly(G) and poly(U). Maintains RHEB at the lysosome in its active GTP-bound form and prevents its interaction with the mTORC1 complex inhibitor TSC2, ensuring activation of the mTORC1 complex by RHEB. Stabilizes the minus ends of kinetochore fibers by protecting them from depolymerization, ensuring functional spindle assembly during mitosis. Following phosphorylation by TTK/MPS1, enhances recruitment of KIF2A to the minus ends of mitotic spindle microtubules which promotes chromosome alignment. Regulates the morphology of microtubule minus ends in mitotic spindle by maintaining them in a closed conformation characterized by the presence of an electron-dense cap. Regulates G2/M transition and spindle assembly during oocyte meiosis. Mediates histone modifications and transcriptional regulation in germinal vesicle oocytes which are required for meiotic progression. Also regulates microtubule nucleation and spindle assembly by activating aurora kinases during oocyte meiosis. Contributes to the establishment of centriolar satellites and also plays a role in primary cilium formation by recruiting TTBK2 to the mother centriole which is necessary for removal of the CP110 cap from the mother centriole, an early step in ciliogenesis. Required for epiblast development during early embryogenesis. Essential for cell viability. This Homo sapiens (Human) protein is Microspherule protein 1 (MCRS1).